A 117-amino-acid chain; its full sequence is Large ribosomal subunit protein uL22 (117 aa).

This sequence belongs to the universal ribosomal protein uL22 family. Part of the 50S ribosomal subunit.

Functionally, this protein binds specifically to 23S rRNA; its binding is stimulated by other ribosomal proteins, e.g. L4, L17, and L20. It is important during the early stages of 50S assembly. It makes multiple contacts with different domains of the 23S rRNA in the assembled 50S subunit and ribosome. In terms of biological role, the globular domain of the protein is located near the polypeptide exit tunnel on the outside of the subunit, while an extended beta-hairpin is found that lines the wall of the exit tunnel in the center of the 70S ribosome. The chain is Large ribosomal subunit protein uL22 from Staphylococcus aureus (strain USA300).